The following is a 471-amino-acid chain: UDP-N-acetylmuramate--L-alanine ligase (471 aa).

Residue 114-120 participates in ATP binding; the sequence is GTHGKTT.

Belongs to the MurCDEF family.

It is found in the cytoplasm. The catalysed reaction is UDP-N-acetyl-alpha-D-muramate + L-alanine + ATP = UDP-N-acetyl-alpha-D-muramoyl-L-alanine + ADP + phosphate + H(+). Its pathway is cell wall biogenesis; peptidoglycan biosynthesis. In terms of biological role, cell wall formation. The protein is UDP-N-acetylmuramate--L-alanine ligase of Rhizobium meliloti (strain 1021) (Ensifer meliloti).